The sequence spans 101 residues: Helix-loop-helix protein 17 (101 aa).

The basic motif stretch occupies residues 14 to 27; the sequence is GVRLSINLRERCRM. Residues 14-68 enclose the bHLH domain; it reads GVRLSINLRERCRMHDLNEALDDLRAVIPYAHGGSVRKLSKIATLLLAKNHIIMQ. The tract at residues 28-68 is helix-loop-helix motif; the sequence is HDLNEALDDLRAVIPYAHGGSVRKLSKIATLLLAKNHIIMQ.

As to expression, expressed in neuronal tissues of the head, including sheath cells of the cephalic sensilla (CEPsh) glia.

The protein resides in the nucleus. Its function is as follows. Probable transcription factor that regulates the expression of dopamine receptors dop-1, dop-2 and dop-3 and thus dopamine-dependent behaviors. May act redundantly with hlh-31 and hlh-32 to regulate ventral CEPsh glia functions. May play a role in chemotactic responses in larvae. This Caenorhabditis elegans protein is Helix-loop-helix protein 17.